Consider the following 398-residue polypeptide: Na(+)/H(+) antiporter NhaA (398 aa).

11 consecutive transmembrane segments (helical) span residues Leu-21–Leu-41, Val-66–Ile-86, Ile-101–Leu-121, Gly-132–Gly-152, Ile-161–Phe-181, Ala-184–Leu-204, Leu-216–Ala-236, Leu-274–Ile-294, Ile-305–Ile-325, Gly-343–Phe-363, and Ile-374–Leu-394.

It belongs to the NhaA Na(+)/H(+) (TC 2.A.33) antiporter family.

Its subcellular location is the cell inner membrane. It catalyses the reaction Na(+)(in) + 2 H(+)(out) = Na(+)(out) + 2 H(+)(in). Its function is as follows. Na(+)/H(+) antiporter that extrudes sodium in exchange for external protons. The protein is Na(+)/H(+) antiporter NhaA of Bordetella bronchiseptica (strain ATCC BAA-588 / NCTC 13252 / RB50) (Alcaligenes bronchisepticus).